The chain runs to 208 residues: Octanoyltransferase (208 aa).

The 179-residue stretch at 30–208 (GTASEAVFIL…ILKQEFYKIF (179 aa)) folds into the BPL/LPL catalytic domain. Substrate is bound by residues 69-76 (RGGKFTYH), 142-144 (SIG), and 155-157 (GVA). Cys173 (acyl-thioester intermediate) is an active-site residue.

Belongs to the LipB family.

It localises to the cytoplasm. The enzyme catalyses octanoyl-[ACP] + L-lysyl-[protein] = N(6)-octanoyl-L-lysyl-[protein] + holo-[ACP] + H(+). It participates in protein modification; protein lipoylation via endogenous pathway; protein N(6)-(lipoyl)lysine from octanoyl-[acyl-carrier-protein]: step 1/2. Its function is as follows. Catalyzes the transfer of endogenously produced octanoic acid from octanoyl-acyl-carrier-protein onto the lipoyl domains of lipoate-dependent enzymes. Lipoyl-ACP can also act as a substrate although octanoyl-ACP is likely to be the physiological substrate. This chain is Octanoyltransferase, found in Orientia tsutsugamushi (strain Boryong) (Rickettsia tsutsugamushi).